The primary structure comprises 279 residues: NH(3)-dependent NAD(+) synthetase (279 aa).

46 to 53 (GVSGGQDS) contacts ATP. Aspartate 52 serves as a coordination point for Mg(2+). Residue arginine 139 participates in deamido-NAD(+) binding. Position 159 (threonine 159) interacts with ATP. Glutamate 164 is a Mg(2+) binding site. Deamido-NAD(+) contacts are provided by lysine 172 and aspartate 179. Residues lysine 188 and threonine 210 each coordinate ATP. 259–260 (HK) is a binding site for deamido-NAD(+).

The protein belongs to the NAD synthetase family. Homodimer.

The enzyme catalyses deamido-NAD(+) + NH4(+) + ATP = AMP + diphosphate + NAD(+) + H(+). Its pathway is cofactor biosynthesis; NAD(+) biosynthesis; NAD(+) from deamido-NAD(+) (ammonia route): step 1/1. Its function is as follows. Catalyzes the ATP-dependent amidation of deamido-NAD to form NAD. Uses ammonia as a nitrogen source. The polypeptide is NH(3)-dependent NAD(+) synthetase (Leifsonia xyli subsp. xyli (strain CTCB07)).